Here is a 158-residue protein sequence, read N- to C-terminus: NAD(P)H-quinone oxidoreductase subunit N (158 aa).

Belongs to the complex I NdhN subunit family. As to quaternary structure, NDH-1 can be composed of about 15 different subunits; different subcomplexes with different compositions have been identified which probably have different functions.

Its subcellular location is the cellular thylakoid membrane. It catalyses the reaction a plastoquinone + NADH + (n+1) H(+)(in) = a plastoquinol + NAD(+) + n H(+)(out). It carries out the reaction a plastoquinone + NADPH + (n+1) H(+)(in) = a plastoquinol + NADP(+) + n H(+)(out). Its function is as follows. NDH-1 shuttles electrons from an unknown electron donor, via FMN and iron-sulfur (Fe-S) centers, to quinones in the respiratory and/or the photosynthetic chain. The immediate electron acceptor for the enzyme in this species is believed to be plastoquinone. Couples the redox reaction to proton translocation, and thus conserves the redox energy in a proton gradient. Cyanobacterial NDH-1 also plays a role in inorganic carbon-concentration. The polypeptide is NAD(P)H-quinone oxidoreductase subunit N (Nostoc punctiforme (strain ATCC 29133 / PCC 73102)).